A 279-amino-acid polypeptide reads, in one-letter code: Biotin synthase (279 aa).

Residues 1 to 228 (MKDIFLCSIC…SARLMIAGGR (228 aa)) enclose the Radical SAM core domain. 3 residues coordinate [4Fe-4S] cluster: Cys-17, Cys-21, and Cys-24. Positions 61, 96, 154, and 221 each coordinate [2Fe-2S] cluster.

Belongs to the radical SAM superfamily. Biotin synthase family. Homodimer. [4Fe-4S] cluster is required as a cofactor. It depends on [2Fe-2S] cluster as a cofactor.

The catalysed reaction is (4R,5S)-dethiobiotin + (sulfur carrier)-SH + 2 reduced [2Fe-2S]-[ferredoxin] + 2 S-adenosyl-L-methionine = (sulfur carrier)-H + biotin + 2 5'-deoxyadenosine + 2 L-methionine + 2 oxidized [2Fe-2S]-[ferredoxin]. It participates in cofactor biosynthesis; biotin biosynthesis; biotin from 7,8-diaminononanoate: step 2/2. Catalyzes the conversion of dethiobiotin (DTB) to biotin by the insertion of a sulfur atom into dethiobiotin via a radical-based mechanism. The chain is Biotin synthase from Wolinella succinogenes (strain ATCC 29543 / DSM 1740 / CCUG 13145 / JCM 31913 / LMG 7466 / NCTC 11488 / FDC 602W) (Vibrio succinogenes).